A 2265-amino-acid chain; its full sequence is Collagen alpha-6(VI) chain (2265 aa).

Positions Met1–Gln18 are cleaved as a signal peptide. Positions Asp19–Thr1390 are nonhelical region. VWFA domains are found at residues Asp26–Val205, Asp228–Leu406, Asp435–Val605, Asp621–Leu790, Asp808–Val981, Asp999–Ile1170, and Asp1186–Ala1378. 3 N-linked (GlcNAc...) asparagine glycosylation sites follow: Asn197, Asn238, and Asn346. Asn760 carries N-linked (GlcNAc...) asparagine glycosylation. Residues Gly1391–Gly1724 are triple-helical region. The tract at residues Asp1398–Ala1722 is disordered. A compositionally biased stretch (acidic residues) spans Glu1455 to Glu1470. Residues Ala1497–Arg1507 show a composition bias toward basic and acidic residues. The Cell attachment site signature appears at Arg1507–Asp1509. A compositionally biased stretch (basic residues) spans Ser1546 to His1558. Positions Leu1725–Ala2265 are nonhelical region. 2 VWFA domains span residues Glu1756 to Gln1936 and Asp1964 to Ile2165. A disordered region spans residues Ser2186–Lys2205.

Belongs to the type VI collagen family. As to quaternary structure, trimers composed of three different chains: alpha-1(VI), alpha-2(VI), and alpha-3(VI) or alpha-4(VI) or alpha-5(VI) or alpha-6(VI). Prolines at the third position of the tripeptide repeating unit (G-X-Y) are hydroxylated in some or all of the chains. In newborn, it is expressed in lung, heart, kidney, muscle, brain, intestine, skin, femur and sternum. In adult, it is expressed in lung, heart, muscle, ovary, brain, liver and sternum.

It localises to the secreted. It is found in the extracellular space. The protein resides in the extracellular matrix. Its function is as follows. Collagen VI acts as a cell-binding protein. The sequence is that of Collagen alpha-6(VI) chain (Col6a6) from Mus musculus (Mouse).